We begin with the raw amino-acid sequence, 129 residues long: M-zodatoxin-Lt8d (129 aa).

Positions 1–20 are cleaved as a signal peptide; sequence MKYFVVALALVAAFACIAES. Residues 21–60 constitute a propeptide that is removed on maturation; it reads KPAESEHELAEVEEENELADLEDAVWLEHLADLSDLEEAR. Positions 57–60 match the Processing quadruplet motif motif; sequence EEAR.

In terms of processing, cleavage of the propeptide depends on the processing quadruplet motif (XXXR, with at least one of X being E). Expressed by the venom gland.

Its subcellular location is the secreted. In terms of biological role, insecticidal, cytolytic and antimicrobial peptide. Forms voltage-dependent, ion-permeable channels in membranes. At high concentration causes cell membrane lysis. This chain is M-zodatoxin-Lt8d (cit 1-4), found in Lachesana tarabaevi (Spider).